A 1082-amino-acid polypeptide reads, in one-letter code: Carbamoyl phosphate synthase large chain (1082 aa).

A carboxyphosphate synthetic domain region spans residues 1–401; that stretch reads MPKDKALKKV…ALLKAVRSLE (401 aa). 12 residues coordinate ATP: Arg129, Arg169, Gly175, Gly176, Lys208, Val210, Glu215, Gly241, Ile242, His243, Gln284, and Glu298. The 195-residue stretch at 133–327 folds into the ATP-grasp 1 domain; it reads KNMCLEIGEP…IAKVATKVAV (195 aa). Mg(2+) is bound by residues Gln284, Glu298, and Asn300. Residues Gln284, Glu298, and Asn300 each coordinate Mn(2+). Residues 402–561 form an oligomerization domain region; sequence TGVTGMNLPE…YSTYEDEDEA (160 aa). The interval 562–944 is carbamoyl phosphate synthetic domain; the sequence is EPQAVRKVVV…ALYKACLSAG (383 aa). One can recognise an ATP-grasp 2 domain in the interval 686–876; it reads DQLVAELGIP…MVNLATRICL (191 aa). Residues Arg722, Lys761, Leu763, Glu767, Gly792, Ile793, His794, Ser795, Gln835, and Glu847 each coordinate ATP. Residues Gln835, Glu847, and Asn849 each contribute to the Mg(2+) site. The Mn(2+) site is built by Gln835, Glu847, and Asn849. Residues 945–1082 enclose the MGS-like domain; the sequence is YTLPSSGKAV…PLIPLQEYVS (138 aa). An allosteric domain region spans residues 945–1082; that stretch reads YTLPSSGKAV…PLIPLQEYVS (138 aa).

Belongs to the CarB family. In terms of assembly, composed of two chains; the small (or glutamine) chain promotes the hydrolysis of glutamine to ammonia, which is used by the large (or ammonia) chain to synthesize carbamoyl phosphate. Tetramer of heterodimers (alpha,beta)4. Mg(2+) serves as cofactor. The cofactor is Mn(2+).

The enzyme catalyses hydrogencarbonate + L-glutamine + 2 ATP + H2O = carbamoyl phosphate + L-glutamate + 2 ADP + phosphate + 2 H(+). It catalyses the reaction hydrogencarbonate + NH4(+) + 2 ATP = carbamoyl phosphate + 2 ADP + phosphate + 2 H(+). It participates in amino-acid biosynthesis; L-arginine biosynthesis; carbamoyl phosphate from bicarbonate: step 1/1. The protein operates within pyrimidine metabolism; UMP biosynthesis via de novo pathway; (S)-dihydroorotate from bicarbonate: step 1/3. Functionally, large subunit of the glutamine-dependent carbamoyl phosphate synthetase (CPSase). CPSase catalyzes the formation of carbamoyl phosphate from the ammonia moiety of glutamine, carbonate, and phosphate donated by ATP, constituting the first step of 2 biosynthetic pathways, one leading to arginine and/or urea and the other to pyrimidine nucleotides. The large subunit (synthetase) binds the substrates ammonia (free or transferred from glutamine from the small subunit), hydrogencarbonate and ATP and carries out an ATP-coupled ligase reaction, activating hydrogencarbonate by forming carboxy phosphate which reacts with ammonia to form carbamoyl phosphate. The sequence is that of Carbamoyl phosphate synthase large chain from Desulforudis audaxviator (strain MP104C).